The following is a 368-amino-acid chain: Histidinol-phosphate aminotransferase (368 aa).

N6-(pyridoxal phosphate)lysine is present on K228.

This sequence belongs to the class-II pyridoxal-phosphate-dependent aminotransferase family. Histidinol-phosphate aminotransferase subfamily. Requires pyridoxal 5'-phosphate as cofactor.

The enzyme catalyses L-histidinol phosphate + 2-oxoglutarate = 3-(imidazol-4-yl)-2-oxopropyl phosphate + L-glutamate. The protein operates within amino-acid biosynthesis; L-histidine biosynthesis; L-histidine from 5-phospho-alpha-D-ribose 1-diphosphate: step 7/9. In Methanosarcina mazei (strain ATCC BAA-159 / DSM 3647 / Goe1 / Go1 / JCM 11833 / OCM 88) (Methanosarcina frisia), this protein is Histidinol-phosphate aminotransferase.